A 709-amino-acid chain; its full sequence is Elongation factor G (709 aa).

In terms of domain architecture, tr-type G spans 8 to 297 (ANTRNIGIMA…AVIDYLPSPL (290 aa)). GTP-binding positions include 17–24 (AHVDAGKT), 81–85 (DTPGH), and 135–138 (NKMD).

Belongs to the TRAFAC class translation factor GTPase superfamily. Classic translation factor GTPase family. EF-G/EF-2 subfamily.

The protein resides in the cytoplasm. Its function is as follows. Catalyzes the GTP-dependent ribosomal translocation step during translation elongation. During this step, the ribosome changes from the pre-translocational (PRE) to the post-translocational (POST) state as the newly formed A-site-bound peptidyl-tRNA and P-site-bound deacylated tRNA move to the P and E sites, respectively. Catalyzes the coordinated movement of the two tRNA molecules, the mRNA and conformational changes in the ribosome. This chain is Elongation factor G, found in Lactococcus lactis subsp. cremoris (strain MG1363).